The chain runs to 649 residues: MELPHDKAWAYLLLTPPPLRDYFIQLPKPATLQLALNRFAAYLEKQYLRDSLYMEKIVIGTHYNVRKNRVLQPRIFVSPSNYTRILSTFYDHPDLIAEVLPIQHLSKSQLKRGGLTKNVLTSGLPEMNNEQNPYAVFEVNTIDDLKACFAFPTEWLIDILTGRNSISLHYTIDRTSIPKWYAHLEARFQYSDGVTKSLTDADLRQHYIGVQPIPVTCEELLQKMNDASINGNTMYRVHGYESIVSSRMETVNDLVKASGKPYDVVNVQTMSSYSRSISKAINQAVTKDRHNKHVGSTKLKNSQGPRTTIFVMPPYITVDVVCSPMTIKPGLGPIQTKLLKSIVDQSPRRFRIAYAAKPQIEQDVLNKRIFSTDEGPESYFQGVELLTPEAKSLLTALPQLVGTFHYEKLSYAHFPSYRLTAGGYNVDYFKRGVTVIVARKHGGKGMVAKLIWKLGTPVIDSDDYGRIIKLVEAGLTIDDAVTQLFSMDYDQRNSTVSAFDEHMEMIVSQSKMKQEITYPRASDPRITAFADYYSKWFLKVPYSDYVASVKNFVTKNGLSGPNGIQSTNHYDTLVIQVHTLPEATQFLGVNNIIEVYPIIDSYIGMILRQQTSNTCAELLLARYYESIHLRNFDMLPVGVVASTLEALVG.

The protein localises to the virion. It is found in the host cytoplasm. It localises to the host cytoskeleton. Minor inner capsid component. Displays NTPase and RNA 5'-triphosphatase (RTPase) activities. May function as a cofactor of polymerase VP2. Associates with microtubules and plays a role in the formation, structural organization and morphology of viral inclusions, where the assembly of cores and the replication of viral RNA occur. The protein is Microtubule-associated protein VP6 (S6) of Cryphonectria parasitica (Chestnut blight fungus).